A 183-amino-acid polypeptide reads, in one-letter code: Small ribosomal subunit protein uS4c (183 aa).

The 62-residue stretch at 82 to 143 (MRLDNILFRL…KQRSKALIQN (62 aa)) folds into the S4 RNA-binding domain.

This sequence belongs to the universal ribosomal protein uS4 family. Part of the 30S ribosomal subunit. Contacts protein S5. The interaction surface between S4 and S5 is involved in control of translational fidelity.

It localises to the plastid. The protein resides in the chloroplast. In terms of biological role, one of the primary rRNA binding proteins, it binds directly to 16S rRNA where it nucleates assembly of the body of the 30S subunit. Its function is as follows. With S5 and S12 plays an important role in translational accuracy. In Freesia sp. (strain Lejeune 1997), this protein is Small ribosomal subunit protein uS4c (rps4).